A 67-amino-acid polypeptide reads, in one-letter code: Small ribosomal subunit protein eS17 (67 aa).

It belongs to the eukaryotic ribosomal protein eS17 family.

This Pyrococcus horikoshii (strain ATCC 700860 / DSM 12428 / JCM 9974 / NBRC 100139 / OT-3) protein is Small ribosomal subunit protein eS17.